The chain runs to 273 residues: Large ribosomal subunit protein uL2 (273 aa).

Positions 228–273 (VDHPHGGGEGKTSGGRHPVTPWGFPTKGKKTRKNKRTSKFIVKKRK) are disordered. The span at 254-273 (KGKKTRKNKRTSKFIVKKRK) shows a compositional bias: basic residues.

It belongs to the universal ribosomal protein uL2 family. Part of the 50S ribosomal subunit. Forms a bridge to the 30S subunit in the 70S ribosome.

In terms of biological role, one of the primary rRNA binding proteins. Required for association of the 30S and 50S subunits to form the 70S ribosome, for tRNA binding and peptide bond formation. It has been suggested to have peptidyltransferase activity; this is somewhat controversial. Makes several contacts with the 16S rRNA in the 70S ribosome. The protein is Large ribosomal subunit protein uL2 of Rickettsia massiliae (strain Mtu5).